We begin with the raw amino-acid sequence, 386 residues long: CRISPR system endoribonuclease Csm6' (386 aa).

Residues 1-146 form a CARF domain region; the sequence is MRVLISAVGD…ASNENIGHDN (146 aa). The HEPN domain stretch occupies residues 147–386; it reads DENIDELIEV…LNKILLTKLN (240 aa).

It belongs to the CRISPR-associated Csm6 family. In terms of assembly, homodimer. The composite ssRNase active site is formed at the dimer interface.

Non-specific ssRNase activity is stimulated about 1000-fold by cyclic oligoadenylate (cOA), a second messenger produced by Cas10 of the ternary Csm effector complex in the presence of a cognate target RNA. CRISPR (clustered regularly interspaced short palindromic repeat) is an adaptive immune system that provides protection against mobile genetic elements (viruses, transposable elements and conjugative plasmids). CRISPR clusters contain spacers, sequences complementary to antecedent mobile elements, and target invading nucleic acids. CRISPR clusters are transcribed and processed into CRISPR RNA (crRNA). The type III-A Csm complex binds crRNA and acts as a crRNA-guided RNase, DNase and cyclic oligoadenylate synthase; binding of target RNA cognate to the crRNA is required for all activities. In a heterologous host this Csm effector complex restricts ssRNA phage MS2, suggesting it may target RNA viruses in vivo. This protein is not part of the Csm complex. In terms of biological role, csm functions as a non-specific ssDNase. Base-pairing between crRNA and target RNA to form a ternary Csm complex activates a ssDNase activity; target RNA cleavage suppresses the ssDNase, a temporal control that prevents uncontrolled DNA degradation. Viral RNA transcripts probably tether the Csm complex to the viral genome, recruiting Cas10 ssDNA activity which is able to degrade DNA in the transcription bubble, spatially controlling the DNase activity. Its function is as follows. A single-strand-specific endoribonuclease (ssRNase) that is approximately 1000-fold stimulated by cyclic oligoadenylate (cOA); although several species of cOA are synthesized by this organism only cyclic hexaadenylate (cA6) stimulates the ssRNase activity. Cleaves preferentially within GA or AA dinucleotides, although the presence of cA6 broadens the preference. The chain is CRISPR system endoribonuclease Csm6' from Streptococcus thermophilus.